Consider the following 145-residue polypeptide: MHPAHLLVLLGVCVSLLGASDIPPLPLNLVQFSYLIRCANKYKRPGWHYANYGCYCGSGGRGTPVDDVDRCCQAHDKCYEDAEKLGCYPKWTTYYYYCGANGPYCKTRTKCQRFVCNCDVVAADCFASYPYNRRYWFYSNKKRCR.

The N-terminal stretch at 1–19 is a signal peptide; that stretch reads MHPAHLLVLLGVCVSLLGA. Positions 20–27 are excised as a propeptide; it reads SDIPPLPL. Intrachain disulfides connect Cys-38–Cys-98, Cys-54–Cys-144, Cys-56–Cys-72, Cys-71–Cys-125, Cys-78–Cys-118, Cys-87–Cys-111, and Cys-105–Cys-116. Tyr-55, Gly-57, and Gly-59 together coordinate Ca(2+). His-75 is a catalytic residue. Position 76 (Asp-76) interacts with Ca(2+). Residue Asp-119 is part of the active site.

Belongs to the phospholipase A2 family. Group I subfamily. D49 sub-subfamily. As to quaternary structure, heterohexamer. 2 forms exist: 2 A or 2 B chains, 2 C chains and 2 covalently-linked D chains, and 1 A or 1 B, 1 C, 2 covalently-linked D chains and 2 differentially glycosylated covalently-linked D chains. Textilotoxin was originally described as pentameric. The cofactor is Ca(2+). As to expression, expressed by the venom gland.

The protein localises to the secreted. It catalyses the reaction a 1,2-diacyl-sn-glycero-3-phosphocholine + H2O = a 1-acyl-sn-glycero-3-phosphocholine + a fatty acid + H(+). Functionally, snake venom oligomeric phospholipase A2 that has potent presynaptic neurotoxicity. Chain A possesses a very low toxicity, but is essential for neurotoxicity. Possesses a low enzymatic activity. PLA2 catalyzes the calcium-dependent hydrolysis of the 2-acyl groups in 3-sn-phosphoglycerides. This is Basic phospholipase A2 textilotoxin A chain from Pseudonaja textilis (Eastern brown snake).